Here is a 497-residue protein sequence, read N- to C-terminus: Glycerol kinase 2 (497 aa).

T13 contributes to the ADP binding site. ATP contacts are provided by T13, T14, and S15. Position 13 (T13) interacts with sn-glycerol 3-phosphate. Position 17 (R17) interacts with ADP. Residues R83, E84, Y134, and D241 each contribute to the sn-glycerol 3-phosphate site. 5 residues coordinate glycerol: R83, E84, Y134, D241, and Q242. ADP contacts are provided by T263 and G305. Residues T263, G305, Q309, and G406 each contribute to the ATP site. Positions 406 and 410 each coordinate ADP.

It belongs to the FGGY kinase family.

The catalysed reaction is glycerol + ATP = sn-glycerol 3-phosphate + ADP + H(+). It functions in the pathway polyol metabolism; glycerol degradation via glycerol kinase pathway; sn-glycerol 3-phosphate from glycerol: step 1/1. Its function is as follows. Key enzyme in the regulation of glycerol uptake and metabolism. Catalyzes the phosphorylation of glycerol to yield sn-glycerol 3-phosphate. This Sulfolobus acidocaldarius (strain ATCC 33909 / DSM 639 / JCM 8929 / NBRC 15157 / NCIMB 11770) protein is Glycerol kinase 2.